The sequence spans 512 residues: Maturase K (512 aa).

The protein belongs to the intron maturase 2 family. MatK subfamily.

The protein localises to the plastid. The protein resides in the chloroplast. Functionally, usually encoded in the trnK tRNA gene intron. Probably assists in splicing its own and other chloroplast group II introns. The sequence is that of Maturase K from Lilium tsingtauense (Twilight lily).